Here is a 358-residue protein sequence, read N- to C-terminus: Putative inhibitor of apoptosis (358 aa).

BIR repeat units lie at residues 4–70 and 90–157; these read EKDR…CPFL and YAAR…CEYL. Zn(2+) contacts are provided by cysteine 127, cysteine 130, histidine 147, and cysteine 154. One can recognise a CARD domain in the interval 193–283; the sequence is EPPNDLSLIR…MLYKHLFVQQ (91 aa). The RING-type zinc-finger motif lies at 311–346; that stretch reads CKVCMDKEVSIVFIPCGHLVVCKDCAPSLRKCPICR.

Belongs to the IAP family.

The protein is Putative inhibitor of apoptosis (PIAP) of Sus scrofa (Pig).